Consider the following 817-residue polypeptide: U3 small nucleolar RNA-associated protein 13 (817 aa).

WD repeat units lie at residues 59–100 (EDEQ…RSMK), 102–139 (SSPS…ITHS), 142–187 (GHGG…HTLQ), 191–233 (SAVR…KCKL), 238–280 (PVNQ…VLKR), 386–425 (GHED…CKFD), 432–476 (GHSA…ASMD), 489–528 (AHEK…LEAT), 531–572 (NHKR…KTLE), 573–614 (GHTN…KTLD), 616–654 (HNNR…EIEE), and 664–705 (EQEQ…LGES).

In terms of assembly, interacts with snoRNA U3. Interacts with MPP10. Component of the ribosomal small subunit (SSU) processome composed of at least 40 protein subunits and snoRNA U3.

The protein localises to the nucleus. It localises to the nucleolus. Involved in nucleolar processing of pre-18S ribosomal RNA. This Saccharomyces cerevisiae (strain ATCC 204508 / S288c) (Baker's yeast) protein is U3 small nucleolar RNA-associated protein 13 (UTP13).